The chain runs to 223 residues: Transcription factor bHLH75 (223 aa).

Positions Phe58–Asp100 are disordered. Residues Gln110–Leu160 enclose the bHLH domain.

In terms of assembly, homodimer. As to expression, expressed in leaves, stems, and flowers.

The protein resides in the nucleus. The protein is Transcription factor bHLH75 (BHLH75) of Arabidopsis thaliana (Mouse-ear cress).